A 267-amino-acid chain; its full sequence is Protein COFACTOR ASSEMBLY OF COMPLEX C SUBUNIT B CCB1, chloroplastic (267 aa).

A chloroplast-targeting transit peptide spans 1–44; it reads MATKLISPPLSCPWVTSREVIIKGLPRRRREWMVTKRNRVSAVT. Residues 45-84 are Lumenal-facing; the sequence is AMIVEPLSVVSSSAIQIHQWWEQNPNSLLLMTEATGGYSL. The chain crosses the membrane as a helical span at residues 85–105; the sequence is ASYYTSLGLFVISVPGLWSLI. At 106 to 164 the chain is on the stromal side; sequence KRSVKSKIVRKTFVVNDVKKEPKQVAGEILSFFTRKNFNITDRGETITFEGKMVPSRGQ. Residues 165-185 form a helical membrane-spanning segment; it reads AALLTFCTCISLASVGLVLTI. Thr-186 is a topological domain (lumenal). Residues 187–207 form a helical membrane-spanning segment; it reads VPDFGNNWFFIILLSPLAGVY. Residues 208-267 are Stromal-facing; that stretch reads YWKKASRKEEIKVKMMVGSKGRLDEIVVQGDDVQVEEMRKELQLNEKGMVYVKGLFERSS.

The protein resides in the plastid. Its subcellular location is the chloroplast thylakoid membrane. Its function is as follows. Required for the biogenesis and accumulation of native cytochrome b6 in the thylakoid membrane. Controls the conversion of apocytochrome b6 to holocytochrome b6. Required for covalent binding of the c-type heme to cytochrome b6. In Arabidopsis thaliana (Mouse-ear cress), this protein is Protein COFACTOR ASSEMBLY OF COMPLEX C SUBUNIT B CCB1, chloroplastic.